We begin with the raw amino-acid sequence, 1167 residues long: Integrin alpha-10 (1167 aa).

The first 22 residues, 1–22, serve as a signal peptide directing secretion; the sequence is MELPFVTHLFLPLVFLTGLCSP. Residues 23 to 1122 are Extracellular-facing; the sequence is FNLDEHHPRL…VVQTRPILIS (1100 aa). 2 FG-GAP repeats span residues 24–85 and 95–154; these read NLDE…HNAP and QLGN…PQGS. The cysteines at positions 76 and 86 are disulfide-linked. 4 N-linked (GlcNAc...) asparagine glycosylation sites follow: Asn98, Asn234, Asn336, and Asn364. The VWFA domain maps to 167–350; sequence DVVIVLDGSN…AALTDIVDAL (184 aa). FG-GAP repeat units follow at residues 361–412, 417–470, 472–534, 535–593, and 597–657; these read HAEN…LFPP, EDEF…KDGA, RVAQ…SLLT, LQGT…GVRP, and QRIA…VTPQ. Asp494, Asp496, Asp498, Asp502, Asp558, Asn560, Asp562, Asp566, Asp620, Asp622, Asp624, and Asp628 together coordinate Ca(2+). Cystine bridges form between Cys666/Cys675 and Cys681/Cys736. 2 N-linked (GlcNAc...) asparagine glycosylation sites follow: Asn733 and Asn763. Cysteines 789 and 795 form a disulfide. N-linked (GlcNAc...) asparagine glycosylation is found at Asn839, Asn921, Asn1011, Asn1018, and Asn1039. The chain crosses the membrane as a helical span at residues 1123–1145; the sequence is LWILIGSVLGGLLLLALLVFCLW. Topologically, residues 1146–1167 are cytoplasmic; it reads KLGFFAHKKIPEEEKREEKLEQ.

The protein belongs to the integrin alpha chain family. In terms of assembly, heterodimer of an alpha and a beta subunit. Alpha-10 associates with beta-1. As to expression, widely expressed with highest expression in muscle and heart. Found in articular cartilage.

The protein resides in the membrane. Functionally, integrin alpha-10/beta-1 is a receptor for collagen. The sequence is that of Integrin alpha-10 (ITGA10) from Homo sapiens (Human).